A 964-amino-acid chain; its full sequence is Protein HIRA (964 aa).

6 WD repeats span residues 10–50 (RHEG…KDNT), 64–103 (DHFGSVNCVRWAKHGRYLASGSDDQVILIHERKAGSGTSE), 123–162 (GHTADVVDLSWSPDDSTLASGSLDNTIHIWNMNNGICTAV), 165–204 (GHTSLVKGVTWDPIGSFIASQSDDKTVMIWRTSDWSLAHK), 259–331 (GHNA…PLFV), and 335–376 (FFSQ…HRLS). The segment at 453-490 (SHEDSKKTAGPTADDVKKGNQLSSPVKQREYRRPDGRK) is disordered. The span at 479–490 (KQREYRRPDGRK) shows a compositional bias: basic and acidic residues. The WD 7 repeat unit spans residues 644–685 (LWSDRISGKVTVLAGNANFWAVGCEDGFLQVYTRCGVRAMPA). Residues 920–940 (ASNRKVQRLLNEFMDLLLEYE) are a coiled coil.

The protein belongs to the WD repeat HIR1 family. As to quaternary structure, interacts with RS2. In terms of tissue distribution, more abundant in apices and young leaf primordia than in fully expanded leaf tissues.

It is found in the nucleus. In terms of biological role, histone chaperone involved in maintining knox genes silencing throughout leaf development. This Zea mays (Maize) protein is Protein HIRA.